The sequence spans 412 residues: Serine hydroxymethyltransferase (412 aa).

(6S)-5,6,7,8-tetrahydrofolate-binding positions include Leu-117 and 121–123; that span reads GHL. Residue Lys-226 is modified to N6-(pyridoxal phosphate)lysine.

Belongs to the SHMT family. As to quaternary structure, homodimer. It depends on pyridoxal 5'-phosphate as a cofactor.

Its subcellular location is the cytoplasm. It catalyses the reaction (6R)-5,10-methylene-5,6,7,8-tetrahydrofolate + glycine + H2O = (6S)-5,6,7,8-tetrahydrofolate + L-serine. It functions in the pathway one-carbon metabolism; tetrahydrofolate interconversion. It participates in amino-acid biosynthesis; glycine biosynthesis; glycine from L-serine: step 1/1. In terms of biological role, catalyzes the reversible interconversion of serine and glycine with tetrahydrofolate (THF) serving as the one-carbon carrier. This reaction serves as the major source of one-carbon groups required for the biosynthesis of purines, thymidylate, methionine, and other important biomolecules. Also exhibits THF-independent aldolase activity toward beta-hydroxyamino acids, producing glycine and aldehydes, via a retro-aldol mechanism. This is Serine hydroxymethyltransferase from Staphylococcus epidermidis (strain ATCC 35984 / DSM 28319 / BCRC 17069 / CCUG 31568 / BM 3577 / RP62A).